A 558-amino-acid chain; its full sequence is Dihydroxy-acid dehydratase (558 aa).

Asp-81 is a Mg(2+) binding site. Cys-122 is a [2Fe-2S] cluster binding site. The Mg(2+) site is built by Asp-123 and Lys-124. N6-carboxylysine is present on Lys-124. Cys-195 contacts [2Fe-2S] cluster. Residue Glu-447 coordinates Mg(2+). The Proton acceptor role is filled by Ser-473.

It belongs to the IlvD/Edd family. In terms of assembly, homodimer. The cofactor is [2Fe-2S] cluster. Mg(2+) serves as cofactor.

It carries out the reaction (2R)-2,3-dihydroxy-3-methylbutanoate = 3-methyl-2-oxobutanoate + H2O. The enzyme catalyses (2R,3R)-2,3-dihydroxy-3-methylpentanoate = (S)-3-methyl-2-oxopentanoate + H2O. It functions in the pathway amino-acid biosynthesis; L-isoleucine biosynthesis; L-isoleucine from 2-oxobutanoate: step 3/4. The protein operates within amino-acid biosynthesis; L-valine biosynthesis; L-valine from pyruvate: step 3/4. Functionally, functions in the biosynthesis of branched-chain amino acids. Catalyzes the dehydration of (2R,3R)-2,3-dihydroxy-3-methylpentanoate (2,3-dihydroxy-3-methylvalerate) into 2-oxo-3-methylpentanoate (2-oxo-3-methylvalerate) and of (2R)-2,3-dihydroxy-3-methylbutanoate (2,3-dihydroxyisovalerate) into 2-oxo-3-methylbutanoate (2-oxoisovalerate), the penultimate precursor to L-isoleucine and L-valine, respectively. The sequence is that of Dihydroxy-acid dehydratase from Bacillus velezensis (strain DSM 23117 / BGSC 10A6 / LMG 26770 / FZB42) (Bacillus amyloliquefaciens subsp. plantarum).